The sequence spans 523 residues: Cytochrome b5 reductase 4 (523 aa).

The region spanning 54–130 is the Cytochrome b5 heme-binding domain; it reads LIDVTEEELA…LKECLIGRMA (77 aa). Heme is bound by residues histidine 89 and histidine 112. The region spanning 167-258 is the CS domain; the sequence is ESHPWYDWFQ…KEPVSWKSLG (92 aa). Residues 275-387 form the FAD-binding FR-type domain; that stretch reads LYYRKCRLAS…SNPQGTFSSF (113 aa). Residues 367–382 and 394–426 each bind FAD; these read ENLT…NPQG and DVFL…KAKL.

It belongs to the flavoprotein pyridine nucleotide cytochrome reductase family. Requires FAD as cofactor.

It is found in the endoplasmic reticulum. It catalyses the reaction 2 Fe(III)-[cytochrome b5] + NADH = 2 Fe(II)-[cytochrome b5] + NAD(+) + H(+). Functionally, NADH-cytochrome b5 reductase involved in endoplasmic reticulum stress response pathway. This is Cytochrome b5 reductase 4 (cyb5r4) from Xenopus tropicalis (Western clawed frog).